A 1394-amino-acid chain; its full sequence is DNA-directed RNA polymerase subunit beta' (1394 aa).

Cys-71, Cys-73, Cys-86, and Cys-89 together coordinate Zn(2+). Positions 462, 464, and 466 each coordinate Mg(2+). 4 residues coordinate Zn(2+): Cys-810, Cys-883, Cys-890, and Cys-893.

Belongs to the RNA polymerase beta' chain family. In terms of assembly, the RNAP catalytic core consists of 2 alpha, 1 beta, 1 beta' and 1 omega subunit. When a sigma factor is associated with the core the holoenzyme is formed, which can initiate transcription. Mg(2+) is required as a cofactor. It depends on Zn(2+) as a cofactor.

The catalysed reaction is RNA(n) + a ribonucleoside 5'-triphosphate = RNA(n+1) + diphosphate. DNA-dependent RNA polymerase catalyzes the transcription of DNA into RNA using the four ribonucleoside triphosphates as substrates. This chain is DNA-directed RNA polymerase subunit beta', found in Beijerinckia indica subsp. indica (strain ATCC 9039 / DSM 1715 / NCIMB 8712).